Consider the following 152-residue polypeptide: NADH-ubiquinone oxidoreductase chain 4 (152 aa).

4 helical membrane passes run 2–22 (FSGATTLMIAHGLTSSMYFCL), 43–63 (ILLPLTAFWWLTASLTNLALP), 84–104 (ITIVLTGLNMLITALYSLHMF), and 128–148 (MLMFMHLAPIILLSLNPNIIL).

Belongs to the complex I subunit 4 family.

Its subcellular location is the mitochondrion membrane. It catalyses the reaction a ubiquinone + NADH + 5 H(+)(in) = a ubiquinol + NAD(+) + 4 H(+)(out). Functionally, core subunit of the mitochondrial membrane respiratory chain NADH dehydrogenase (Complex I) that is believed to belong to the minimal assembly required for catalysis. Complex I functions in the transfer of electrons from NADH to the respiratory chain. The immediate electron acceptor for the enzyme is believed to be ubiquinone. The chain is NADH-ubiquinone oxidoreductase chain 4 (MT-ND4) from Macaca fascicularis (Crab-eating macaque).